The chain runs to 728 residues: E3 ubiquitin-protein ligase TRIM36 (728 aa).

The RING-type; degenerate zinc-finger motif lies at 33-84 (CPACKELFTHPLILPCQHSICHKCVKELLLTLDDSFNDVGSDNSNQSSPRLR). 2 consecutive B box-type zinc fingers follow at residues 154 to 192 (AIMC…WGTI) and 207 to 249 (PKIL…VTTM). Zn(2+) contacts are provided by Cys-212, His-215, Cys-235, and His-241. Residues 271 to 345 (ESQVKSQISE…MEEYQGLLEN (75 aa)) adopt a coiled-coil conformation. Residues 356 to 413 (LKETDQSCFVQTAKQLHLRIQKATESLKSFRPAAQTSFEDYVVNTSKQTELLGELSFF) form the COS domain. The 92-residue stretch at 419 to 510 (VPEINEEQSK…RELILHTPPA (92 aa)) folds into the Fibronectin type-III domain. The B30.2/SPRY domain maps to 508 to 720 (PPAPVFSFLF…IQLEEPITAK (213 aa)).

Belongs to the TRIM/RBCC family. As to quaternary structure, interacts with CENPH. As to expression, highly expressed in testis, prostate and brain. Weakly expressed in kidney, lung and heart. Expressed in fetal tissues.

It is found in the cytoplasm. Its subcellular location is the cytoplasmic vesicle. It localises to the secretory vesicle. The protein resides in the acrosome. The protein localises to the cytoskeleton. It catalyses the reaction S-ubiquitinyl-[E2 ubiquitin-conjugating enzyme]-L-cysteine + [acceptor protein]-L-lysine = [E2 ubiquitin-conjugating enzyme]-L-cysteine + N(6)-ubiquitinyl-[acceptor protein]-L-lysine.. Its function is as follows. E3 ubiquitin-protein ligase which mediates ubiquitination and subsequent proteasomal degradation of target proteins. Involved in chromosome segregation and cell cycle regulation. May play a role in the acrosome reaction and fertilization. The polypeptide is E3 ubiquitin-protein ligase TRIM36 (TRIM36) (Homo sapiens (Human)).